Consider the following 712-residue polypeptide: Ribosomal RNA large subunit methyltransferase K/L (712 aa).

The THUMP domain maps to 46–157 (GAYQALLHSR…RENMVVSLDL (112 aa)).

The protein belongs to the methyltransferase superfamily. RlmKL family.

It is found in the cytoplasm. It catalyses the reaction guanosine(2445) in 23S rRNA + S-adenosyl-L-methionine = N(2)-methylguanosine(2445) in 23S rRNA + S-adenosyl-L-homocysteine + H(+). The catalysed reaction is guanosine(2069) in 23S rRNA + S-adenosyl-L-methionine = N(2)-methylguanosine(2069) in 23S rRNA + S-adenosyl-L-homocysteine + H(+). Its function is as follows. Specifically methylates the guanine in position 2445 (m2G2445) and the guanine in position 2069 (m7G2069) of 23S rRNA. The chain is Ribosomal RNA large subunit methyltransferase K/L from Actinobacillus pleuropneumoniae serotype 5b (strain L20).